The primary structure comprises 575 residues: Manganese transporter SMF1 (575 aa).

Residues 1–70 lie on the Extracellular side of the membrane; it reads MVNVGPSHAA…TYVSKRQVMR (70 aa). A Phosphoserine modification is found at serine 24. Residues lysine 33 and lysine 34 each participate in a glycyl lysine isopeptide (Lys-Gly) (interchain with G-Cter in ubiquitin) cross-link. Residues 71–91 form a helical membrane-spanning segment; sequence DIFAKYLKFIGPGLMVSVAYI. The Cytoplasmic portion of the chain corresponds to 92-108; the sequence is DPGNYSTAVDAGASNQF. Residues 109-129 form a helical membrane-spanning segment; that stretch reads SLLCIILLSNFIAIFLQCLCI. Residues 130 to 156 lie on the Extracellular side of the membrane; the sequence is KLGSVTGLDLSRACREYLPRWLNWTLY. Residues 157 to 177 form a helical membrane-spanning segment; sequence FFAECAVIATDIAEVIGTAIA. The Cytoplasmic segment spans residues 178-179; that stretch reads LN. A helical transmembrane segment spans residues 180–200; sequence ILIKVPLPAGVAITVVDVFLI. Topologically, residues 201 to 218 are extracellular; the sequence is MFTYKPGASSIRFIRIFE. Residues 219 to 239 traverse the membrane as a helical segment; sequence CFVAVLVVGVCICFAIELAYI. Topologically, residues 240–266 are cytoplasmic; sequence PKSTSVKQVFRGFVPSAQMFDHNGIYT. The chain crosses the membrane as a helical span at residues 267-287; it reads AISILGATVMPHSLFLGSALV. Over 288–344 the chain is Extracellular; that stretch reads QPRLLDYDVKHGNYTVSEEQDKVKKSKSTEEIMEEKYFNYRPTNAAIKYCMKYSMVE. The helical transmembrane segment at 345-365 threads the bilayer; sequence LSITLFTLALFVNCAILVVAG. Residues 366–396 are Cytoplasmic-facing; sequence STLYNSPEADGADLFTIHELLSRNLAPAAGT. A helical transmembrane segment spans residues 397 to 417; it reads IFMLALLLSGQSAGVVCTMSG. Over 418–463 the chain is Extracellular; the sequence is QIVSEGHINWKLQPWQRRLATRCISIIPCLVISICIGREALSKALN. Residues 464-484 form a helical membrane-spanning segment; sequence ASQVVLSIVLPFLVAPLIFFT. Residues 485-543 lie on the Cytoplasmic side of the membrane; that stretch reads CKKSIMKTEITVDHTEEDSHNHQNNNDRSAGSVIEQDGSSGMEIENGKDVKIVYMANNW. Residues 498–517 form a disordered region; that stretch reads HTEEDSHNHQNNNDRSAGSV. A helical transmembrane segment spans residues 544-564; that stretch reads IITVIAIIVWLFLSLLNVYAI. The Extracellular portion of the chain corresponds to 565–575; the sequence is VQLGMSHGDIS.

Belongs to the NRAMP family.

It is found in the cell membrane. The enzyme catalyses Mn(2+)(in) = Mn(2+)(out). Functionally, high-affinity manganese transporter involved in manganese uptake from the extracellular environment. Also contributes to cellular accumulation of other divalent metal ions such as cadmium, cobalt, copper, iron and nickel. This is Manganese transporter SMF1 (SMF1) from Saccharomyces cerevisiae (strain ATCC 204508 / S288c) (Baker's yeast).